The chain runs to 210 residues: Ribonuclease HII (210 aa).

The RNase H type-2 domain occupies 18 to 210 (GLIAGVDEVG…FKPVKALLGL (193 aa)). A divalent metal cation contacts are provided by aspartate 24, glutamate 25, and aspartate 116.

This sequence belongs to the RNase HII family. It depends on Mn(2+) as a cofactor. The cofactor is Mg(2+).

Its subcellular location is the cytoplasm. The enzyme catalyses Endonucleolytic cleavage to 5'-phosphomonoester.. In terms of biological role, endonuclease that specifically degrades the RNA of RNA-DNA hybrids. This chain is Ribonuclease HII, found in Shewanella baltica (strain OS155 / ATCC BAA-1091).